Consider the following 739-residue polypeptide: DNA ligase (739 aa).

NAD(+) is bound by residues 34–38 (DADYD), 83–84 (SL), and Glu-117. Lys-119 acts as the N6-AMP-lysine intermediate in catalysis. The NAD(+) site is built by Arg-140, Glu-175, Lys-291, and Lys-315. The Zn(2+) site is built by Cys-420, Cys-423, Cys-438, and Cys-444. In terms of domain architecture, BRCT spans 660 to 739 (ADDSPVAGKT…DGWLDLIGQA (80 aa)).

The protein belongs to the NAD-dependent DNA ligase family. LigA subfamily. It depends on Mg(2+) as a cofactor. The cofactor is Mn(2+).

The catalysed reaction is NAD(+) + (deoxyribonucleotide)n-3'-hydroxyl + 5'-phospho-(deoxyribonucleotide)m = (deoxyribonucleotide)n+m + AMP + beta-nicotinamide D-nucleotide.. In terms of biological role, DNA ligase that catalyzes the formation of phosphodiester linkages between 5'-phosphoryl and 3'-hydroxyl groups in double-stranded DNA using NAD as a coenzyme and as the energy source for the reaction. It is essential for DNA replication and repair of damaged DNA. The chain is DNA ligase from Ruegeria sp. (strain TM1040) (Silicibacter sp.).